Consider the following 198-residue polypeptide: MIEFVYPHTQLVAGVDEVGRGPLVGAVVTAAVILDPARPIAGLNDSKKLSEKRRLALCEEIKEKALSWSLGRAEPHEIDELNILHATMLAMQRAVAGLHIAPEYVLIDGNRCPKLPMPSMAVVKGDSRVPEISAASILAKVTRDAEMAALDIVFPQYGFAQHKGYPTAFHLEKLAEYGATEHHRRSFGPVKRALGLAS.

Residues 10-198 (QLVAGVDEVG…PVKRALGLAS (189 aa)) enclose the RNase H type-2 domain. The a divalent metal cation site is built by Asp-16, Glu-17, and Asp-108.

Belongs to the RNase HII family. Requires Mn(2+) as cofactor. Mg(2+) serves as cofactor.

The protein resides in the cytoplasm. It carries out the reaction Endonucleolytic cleavage to 5'-phosphomonoester.. Its function is as follows. Endonuclease that specifically degrades the RNA of RNA-DNA hybrids. The sequence is that of Ribonuclease HII from Escherichia coli O6:H1 (strain CFT073 / ATCC 700928 / UPEC).